The primary structure comprises 238 residues: MRQSGASQPLLINMYLPDPVGDGLFKDGKNPSWGPLSPAVQKGSGQIQLWQFLLELLADRANAGCIAWEGGHGEFKLTDPDEVARRWGERKSKPNMNYDKLSRALRYYYDKNIMSKVHGKRYAYRFDFQGLAQACQPPPAHAHAAAAAAAAAAAAQDGALYKLPAGLAPLPFPGLSKLNLMAASAGVAPAGFSYWPGPGPAATAAAATAALYPSPSLQPPPGPFGAVAAASHLGGHYH.

The ETS DNA-binding region spans 47–127 (IQLWQFLLEL…HGKRYAYRFD (81 aa)). Residues 129-238 (QGLAQACQPP…AASHLGGHYH (110 aa)) are may mediate active transcriptional repression.

Belongs to the ETS family. In brain, exclusively expressed in the major serotonergic neurons of the dorsal and median raphe nuclei located in the midbrain and pons. Also detected in prostate and small intestine.

It localises to the nucleus. In terms of biological role, functions as a transcriptional regulator. According to PubMed:12761502, it functions as a transcriptional repressor. Functions in the differentiation and the maintenance of the central serotonergic neurons. May play a role in cell growth. The polypeptide is Protein FEV (FEV) (Homo sapiens (Human)).